The chain runs to 276 residues: Diaminopimelate epimerase (276 aa).

Positions 13, 46, and 66 each coordinate substrate. The active-site Proton donor is C75. Substrate-binding positions include 76 to 77 (GN), N159, N192, and 210 to 211 (ER). The active-site Proton acceptor is the C219. 220-221 (GS) serves as a coordination point for substrate.

It belongs to the diaminopimelate epimerase family. Homodimer.

Its subcellular location is the cytoplasm. The enzyme catalyses (2S,6S)-2,6-diaminopimelate = meso-2,6-diaminopimelate. The protein operates within amino-acid biosynthesis; L-lysine biosynthesis via DAP pathway; DL-2,6-diaminopimelate from LL-2,6-diaminopimelate: step 1/1. In terms of biological role, catalyzes the stereoinversion of LL-2,6-diaminopimelate (L,L-DAP) to meso-diaminopimelate (meso-DAP), a precursor of L-lysine and an essential component of the bacterial peptidoglycan. The polypeptide is Diaminopimelate epimerase (Coxiella burnetii (strain CbuK_Q154) (Coxiella burnetii (strain Q154))).